Reading from the N-terminus, the 296-residue chain is tRNA dimethylallyltransferase (296 aa).

Gly-11–Thr-18 contributes to the ATP binding site. Thr-13 to Thr-18 provides a ligand contact to substrate. The tract at residues Asp-36–Gln-39 is interaction with substrate tRNA.

It belongs to the IPP transferase family. In terms of assembly, monomer. Mg(2+) serves as cofactor.

The catalysed reaction is adenosine(37) in tRNA + dimethylallyl diphosphate = N(6)-dimethylallyladenosine(37) in tRNA + diphosphate. In terms of biological role, catalyzes the transfer of a dimethylallyl group onto the adenine at position 37 in tRNAs that read codons beginning with uridine, leading to the formation of N6-(dimethylallyl)adenosine (i(6)A). This Streptococcus equi subsp. equi (strain 4047) protein is tRNA dimethylallyltransferase.